The primary structure comprises 629 residues: Carboxypeptidase Y homolog ARB_06361 (629 aa).

An N-terminal signal peptide occupies residues 1–18 (MLITWLLDVLLLAPPVAA). N-linked (GlcNAc...) asparagine glycans are attached at residues Asn157 and Asn197. The active site involves Ser235. Cysteines 326 and 355 form a disulfide. Residues Asn405 and Asn418 are each glycosylated (N-linked (GlcNAc...) asparagine). The active site involves Asp453. Cys456 contacts substrate. 2 N-linked (GlcNAc...) asparagine glycosylation sites follow: Asn463 and Asn554.

The protein belongs to the peptidase S10 family.

Its subcellular location is the secreted. The catalysed reaction is Release of a C-terminal amino acid with broad specificity.. Involved in degradation of small peptides. The polypeptide is Carboxypeptidase Y homolog ARB_06361 (Arthroderma benhamiae (strain ATCC MYA-4681 / CBS 112371) (Trichophyton mentagrophytes)).